Consider the following 582-residue polypeptide: Sodium-dependent low-affinity dicarboxylate transporter 1 (582 aa).

12 helical membrane-spanning segments follow: residues 17–37 (SFVIWGALLIFSPLLMFVGDS), 59–79 (ALPLAITAFIPMILFPLFGIM), 87–107 (AYLPDTCFLFMGGLMVALAVE), 130–150 (VMAGFMGVTGFLSMWISNTAT), 224–244 (LMLSVCFSANIGGAATITGTA), 271–291 (IFAFPMVFCCLIYCWCVLYLL), 317–337 (FSFAEMAVIFCFALLLVLWIL), 353–373 (EFVSDATSAMFIVILLFTLPE), 401–421 (FPWSVLFLLGGGFALAAGVKE), 455–475 (TNVCSNTVIASIFIPIVAELA), 482–502 (PLNFMLPVTISASFAFLLPVA), and 527–547 (VTLGCVVLSMLNMLLWAGFVF).

The protein belongs to the SLC13A/DASS transporter (TC 2.A.47) family. NADC subfamily. As to expression, nad-1 and nad-2 are coexpressed in the intestinal tract from early larvae to adults, expression is from the pharynx through to the anus. Expression level is significantly greater in the anterior half of the intestine than in the posterior half.

It localises to the membrane. Its function is as follows. Low affinity sodium-dicarboxylate cotransporter that accepts a range of tricarboxylic acid-cycle intermediates with 4-5 carbon atoms. There is no interaction with monocarboxylates. The protein is Sodium-dependent low-affinity dicarboxylate transporter 1 (nac-1) of Caenorhabditis elegans.